The sequence spans 163 residues: Large ribosomal subunit protein uL10 (163 aa).

The protein belongs to the universal ribosomal protein uL10 family. As to quaternary structure, part of the ribosomal stalk of the 50S ribosomal subunit. The N-terminus interacts with L11 and the large rRNA to form the base of the stalk. The C-terminus forms an elongated spine to which L12 dimers bind in a sequential fashion forming a multimeric L10(L12)X complex.

In terms of biological role, forms part of the ribosomal stalk, playing a central role in the interaction of the ribosome with GTP-bound translation factors. In Histophilus somni (strain 2336) (Haemophilus somnus), this protein is Large ribosomal subunit protein uL10.